The chain runs to 295 residues: MIAELEGIDIRENEALKHYTYTQVGGPADFLAFPRNHYELSRIVDYANHNHIPWMVLGNASNLIVRDGGIRGFVIMFDKLNAVRLNGYTLEAEAGANLIETTKVAKFHSLTGFEFACGIPGSIGGAVFMNAGAYGGEIAHIFLSAKVLTPEGKIKKISAREMAFGYRHSVIQETGDIVISAKFALKPGNHDSICQEMNRLNHLRKLKQPLEFPSCGSVFKRPPGHFAGQLIMDANLKGHRVGGVEVSKKHAGFMINVADGSAKDYEDLIAHVIRTVEQASGVRLEPEVRIIGESL.

Positions 23 to 188 (QVGGPADFLA…ISAKFALKPG (166 aa)) constitute an FAD-binding PCMH-type domain. The active site involves Arg167. Ser217 functions as the Proton donor in the catalytic mechanism. Glu287 is an active-site residue.

This sequence belongs to the MurB family. Requires FAD as cofactor.

Its subcellular location is the cytoplasm. The catalysed reaction is UDP-N-acetyl-alpha-D-muramate + NADP(+) = UDP-N-acetyl-3-O-(1-carboxyvinyl)-alpha-D-glucosamine + NADPH + H(+). The protein operates within cell wall biogenesis; peptidoglycan biosynthesis. Its function is as follows. Cell wall formation. This Streptococcus equi subsp. equi (strain 4047) protein is UDP-N-acetylenolpyruvoylglucosamine reductase.